The chain runs to 738 residues: Outer membrane protein assembly factor BamA (738 aa).

Residues 1–13 (MVWLLFLSSFCFA) form the signal peptide. POTRA domains are found at residues 14–81 (DEVV…LQEN), 82–159 (PILR…VKEA), 162–248 (TVIR…LKEG), 251–329 (YSFG…VVST), and 332–404 (YRIR…VKER).

It belongs to the BamA family. As to quaternary structure, part of the Bam complex.

The protein localises to the cell outer membrane. In terms of biological role, part of the outer membrane protein assembly complex, which is involved in assembly and insertion of beta-barrel proteins into the outer membrane. This is Outer membrane protein assembly factor BamA from Neorickettsia risticii (strain Illinois).